The chain runs to 149 residues: Probable glycine-rich RNA-binding protein 1 (149 aa).

In terms of domain architecture, RRM spans 8-83; the sequence is YRCFVGGLAW…LDGRNITAQA (76 aa). The segment at 80 to 149 is disordered; the sequence is TAQARGSGTR…GRSEGGSWRN (70 aa). Composition is skewed to gly residues over residues 87-101, 110-123, and 131-143; these read GTRGGMVGGYGSGGY, YNRGGGGGYGGGYG, and YGDGGYGGQGRSE.

The protein belongs to the GR-RBP family.

Functionally, possibly has a role in RNA transcription or processing during stress. The sequence is that of Probable glycine-rich RNA-binding protein 1 (RBG1) from Arabidopsis thaliana (Mouse-ear cress).